The primary structure comprises 461 residues: Deoxyhypusine synthase (461 aa).

Spermidine-binding positions include 166-167 (EH), Glu-331, His-377, 403-405 (GSD), and 412-418 (EAVSWGK). The active-site Nucleophile is the Lys-418. Residues 428-448 (VYSEVTIVFPLIVVHVFVAWV) traverse the membrane as a helical segment.

It belongs to the deoxyhypusine synthase family. In terms of assembly, heterotetramer formed by a homodimer of the non-catalytic regulatory subunit DHSp and a homodimer of the catalytic subunit DHSc where DHSc appears to bind spermidine and DHSp appears to bind NAD(+). Requires NAD(+) as cofactor.

The protein localises to the membrane. It carries out the reaction [eIF5A protein]-L-lysine + spermidine = [eIF5A protein]-deoxyhypusine + propane-1,3-diamine. It participates in protein modification; eIF5A hypusination. Its activity is regulated as follows. Allosterically activated by DHSp. Inhibited by spermididine analog N1-guanyl-1,7-diamineoheptane (GC7). Functionally, in association with the non-catalytic regulatory subunit DHSp, catalyzes the NAD-dependent oxidative cleavage of spermidine and the subsequent transfer of the butylamine moiety of spermidine to the epsilon-amino group of a specific lysine residue of the eIF5A precursor protein to form the intermediate deoxyhypusine residue. Regulates protein levels of its regulatory subunit DHSp. Required for cell growth and survival. The chain is Deoxyhypusine synthase from Trypanosoma brucei brucei (strain 927/4 GUTat10.1).